A 163-amino-acid polypeptide reads, in one-letter code: Nucleotide-binding protein AM1_1863 (163 aa).

This sequence belongs to the YajQ family.

Functionally, nucleotide-binding protein. This is Nucleotide-binding protein AM1_1863 from Acaryochloris marina (strain MBIC 11017).